The chain runs to 138 residues: Acidic phospholipase A2 BE-I-PLA2 (138 aa).

Positions 1–16 (MRTLWIMAVLLVGVEG) are cleaved as a signal peptide. 7 disulfides stabilise this stretch: Cys-42–Cys-131, Cys-44–Cys-60, Cys-59–Cys-111, Cys-65–Cys-138, Cys-66–Cys-104, Cys-73–Cys-97, and Cys-91–Cys-102. Positions 43, 45, and 47 each coordinate Ca(2+). The active site involves His-63. Asp-64 is a Ca(2+) binding site. Asp-105 is an active-site residue.

Belongs to the phospholipase A2 family. Group II subfamily. D49 sub-subfamily. Ca(2+) is required as a cofactor. As to expression, expressed by the venom gland.

The protein resides in the secreted. The catalysed reaction is a 1,2-diacyl-sn-glycero-3-phosphocholine + H2O = a 1-acyl-sn-glycero-3-phosphocholine + a fatty acid + H(+). Functionally, snake venom phospholipase A2 that shows a potent inhibition of human platelet aggregation. This inhibition is concentration-dependent when aggregation is induced by collagen, and concentration-independent when aggregation is induced by arachidonic acid. In human umbilical-cord vein endothelial cells, this toxin stimulates endothelial cells to release prostaglandin I(2), suggesting an increase of its potential anti-platelet activity in vivo. PLA2 catalyzes the calcium-dependent hydrolysis of the 2-acyl groups in 3-sn-phosphoglycerides. In Bothrops erythromelas (Caatinga lance head), this protein is Acidic phospholipase A2 BE-I-PLA2.